The primary structure comprises 248 residues: Probable transcriptional regulatory protein Atu3727 (248 aa).

Positions 1 to 21 (MAGHSQFKNIMHRKGKQDSVR) are disordered.

Belongs to the TACO1 family.

It is found in the cytoplasm. The chain is Probable transcriptional regulatory protein Atu3727 from Agrobacterium fabrum (strain C58 / ATCC 33970) (Agrobacterium tumefaciens (strain C58)).